The chain runs to 498 residues: Aspartyl aminopeptidase (498 aa).

H91 serves as a coordination point for Zn(2+). H166 contacts substrate. A Zn(2+)-binding site is contributed by D274. E311 is a binding site for substrate. E312 and D363 together coordinate Zn(2+). Substrate contacts are provided by D363, H366, K391, and Y398. H463 lines the Zn(2+) pocket.

The protein belongs to the peptidase M18 family. In terms of assembly, tetrahedron-shaped homododecamer built from six homodimers. The cofactor is Zn(2+). In terms of processing, the N-terminus is blocked.

The catalysed reaction is Release of an N-terminal aspartate or glutamate from a peptide, with a preference for aspartate.. Its activity is regulated as follows. Inhibited by zinc. Stimulated by calcium and bacitracin. The polypeptide is Aspartyl aminopeptidase (dapA) (Aspergillus oryzae (strain ATCC 42149 / RIB 40) (Yellow koji mold)).